Reading from the N-terminus, the 532-residue chain is Glutamate--cysteine ligase (532 aa).

The protein belongs to the glutamate--cysteine ligase type 1 family. Type 1 subfamily.

It carries out the reaction L-cysteine + L-glutamate + ATP = gamma-L-glutamyl-L-cysteine + ADP + phosphate + H(+). Its pathway is sulfur metabolism; glutathione biosynthesis; glutathione from L-cysteine and L-glutamate: step 1/2. The chain is Glutamate--cysteine ligase from Pseudomonas fluorescens (strain ATCC BAA-477 / NRRL B-23932 / Pf-5).